Here is a 127-residue protein sequence, read N- to C-terminus: Small ribosomal subunit protein uS11 (127 aa).

Belongs to the universal ribosomal protein uS11 family. In terms of assembly, part of the 30S ribosomal subunit. Interacts with proteins S7 and S18. Binds to IF-3.

Located on the platform of the 30S subunit, it bridges several disparate RNA helices of the 16S rRNA. Forms part of the Shine-Dalgarno cleft in the 70S ribosome. This is Small ribosomal subunit protein uS11 from Rickettsia felis (strain ATCC VR-1525 / URRWXCal2) (Rickettsia azadi).